We begin with the raw amino-acid sequence, 282 residues long: 4-hydroxy-3-methylbut-2-enyl diphosphate reductase (282 aa).

A [4Fe-4S] cluster-binding site is contributed by C12. The (2E)-4-hydroxy-3-methylbut-2-enyl diphosphate site is built by H40 and H72. Residues H40 and H72 each coordinate dimethylallyl diphosphate. Isopentenyl diphosphate contacts are provided by H40 and H72. Residue C94 participates in [4Fe-4S] cluster binding. H122 provides a ligand contact to (2E)-4-hydroxy-3-methylbut-2-enyl diphosphate. A dimethylallyl diphosphate-binding site is contributed by H122. Residue H122 coordinates isopentenyl diphosphate. The active-site Proton donor is E124. T160 serves as a coordination point for (2E)-4-hydroxy-3-methylbut-2-enyl diphosphate. Residue C188 participates in [4Fe-4S] cluster binding. (2E)-4-hydroxy-3-methylbut-2-enyl diphosphate is bound by residues S216, N218, and S260. 3 residues coordinate dimethylallyl diphosphate: S216, N218, and S260. Residues S216, N218, and S260 each coordinate isopentenyl diphosphate.

The protein belongs to the IspH family. It depends on [4Fe-4S] cluster as a cofactor.

The catalysed reaction is isopentenyl diphosphate + 2 oxidized [2Fe-2S]-[ferredoxin] + H2O = (2E)-4-hydroxy-3-methylbut-2-enyl diphosphate + 2 reduced [2Fe-2S]-[ferredoxin] + 2 H(+). It catalyses the reaction dimethylallyl diphosphate + 2 oxidized [2Fe-2S]-[ferredoxin] + H2O = (2E)-4-hydroxy-3-methylbut-2-enyl diphosphate + 2 reduced [2Fe-2S]-[ferredoxin] + 2 H(+). Its pathway is isoprenoid biosynthesis; dimethylallyl diphosphate biosynthesis; dimethylallyl diphosphate from (2E)-4-hydroxy-3-methylbutenyl diphosphate: step 1/1. It functions in the pathway isoprenoid biosynthesis; isopentenyl diphosphate biosynthesis via DXP pathway; isopentenyl diphosphate from 1-deoxy-D-xylulose 5-phosphate: step 6/6. Catalyzes the conversion of 1-hydroxy-2-methyl-2-(E)-butenyl 4-diphosphate (HMBPP) into a mixture of isopentenyl diphosphate (IPP) and dimethylallyl diphosphate (DMAPP). Acts in the terminal step of the DOXP/MEP pathway for isoprenoid precursor biosynthesis. The sequence is that of 4-hydroxy-3-methylbut-2-enyl diphosphate reductase from Geotalea daltonii (strain DSM 22248 / JCM 15807 / FRC-32) (Geobacter daltonii).